The chain runs to 149 residues: Large ribosomal subunit protein uL15 (149 aa).

A disordered region spans residues Met1 to Leu57. Residues Ile23 to Met35 show a composition bias toward gly residues.

It belongs to the universal ribosomal protein uL15 family. In terms of assembly, part of the 50S ribosomal subunit.

In terms of biological role, binds to the 23S rRNA. This chain is Large ribosomal subunit protein uL15, found in Acaryochloris marina (strain MBIC 11017).